The primary structure comprises 246 residues: DNA repair protein RecO (246 aa).

The protein belongs to the RecO family.

Involved in DNA repair and RecF pathway recombination. This is DNA repair protein RecO from Bifidobacterium adolescentis (strain ATCC 15703 / DSM 20083 / NCTC 11814 / E194a).